We begin with the raw amino-acid sequence, 708 residues long: O-antigen chain terminator bifunctional methyltransferase/kinase WbdD (708 aa).

The interval 1-210 is methyltransferase; sequence MTKDLNTLVS…VPRPMYLVSN (210 aa). S-adenosyl-L-methionine contacts are provided by residues 16–17, Arg-36, Gly-61, 82–87, 108–111, and Leu-128; these read YQ, DFQQEN, and GRIE. The interval 211–459 is kinase; sequence HRVLINDFNQ…AKLPSAEQQR (249 aa). ATP-binding positions include Pro-229, His-237, 241 to 243, Lys-252, Glu-274, 309 to 311, Met-358, and Asp-369; these read RRY and EKL. Positions 485–594 form a coiled coil; that stretch reads AGSEALRGQI…EIEKIHRSRS (110 aa). A required for membrane-binding region spans residues 601–669; the sequence is YRYLGLQIHL…RLYRRMNPLP (69 aa). The required for localizing WbdA to the membrane stretch occupies residues 687 to 708; sequence VMHPELLPPEVYEIYLKLTKNK.

Belongs to the WbdD family. Homotrimer in solution. Interacts with WbdA.

The protein resides in the cell inner membrane. The enzyme catalyses 3-O-phospho-alpha-D-Man-(1-&gt;2)-alpha-D-Man-(1-&gt;2)-[alpha-D-Man-(1-&gt;3)-alpha-D-Man-(1-&gt;3)-alpha-D-Man-(1-&gt;2)-alpha-D-Man-(1-&gt;2)](n)-alpha-D-Man-(1-&gt;3)-alpha-D-Man-(1-&gt;3)-alpha-D-Man-(1-&gt;3)-alpha-D-GlcNAc-di-trans,octa-cis-undecaprenyl diphosphate + S-adenosyl-L-methionine = 3-O-methylphospho-alpha-D-Man-(1-&gt;2)-alpha-D-Man-(1-&gt;2)-[alpha-D-Man-(1-&gt;3)-alpha-D-Man-(1-&gt;3)-alpha-D-Man-(1-&gt;2)-alpha-D-Man-(1-&gt;2)](n)-alpha-D-Man-(1-&gt;3)-alpha-D-Man-(1-&gt;3)-alpha-D-Man-(1-&gt;3)-alpha-D-GlcNAc-di-trans,octa-cis-undecaprenyl diphosphate + S-adenosyl-L-homocysteine. The catalysed reaction is alpha-D-Man-(1-&gt;2)-alpha-D-Man-(1-&gt;2)-[alpha-D-Man-(1-&gt;3)-alpha-D-Man-(1-&gt;3)-alpha-D-Man-(1-&gt;2)-alpha-D-Man-(1-&gt;2)](n)-alpha-D-Man-(1-&gt;3)-alpha-D-Man-(1-&gt;3)-alpha-D-Man-(1-&gt;3)-alpha-D-GlcNAc-di-trans,octa-cis-undecaprenyl diphosphate + ATP = 3-O-phospho-alpha-D-Man-(1-&gt;2)-alpha-D-Man-(1-&gt;2)-[alpha-D-Man-(1-&gt;3)-alpha-D-Man-(1-&gt;3)-alpha-D-Man-(1-&gt;2)-alpha-D-Man-(1-&gt;2)](n)-alpha-D-Man-(1-&gt;3)-alpha-D-Man-(1-&gt;3)-alpha-D-Man-(1-&gt;3)-alpha-D-GlcNAc-di-trans,octa-cis-undecaprenyl diphosphate + ADP + H(+). It functions in the pathway bacterial outer membrane biogenesis; LPS O-antigen biosynthesis. Functionally, regulates the length of the LPS O-antigen polysaccharide chain. Stops the polymerization of the chain by phosphorylating and then methylating the phosphate on the terminal sugar. This terminal modification is essential for export of the O-antigen across the inner membrane. WbdD is also required for correct localization of the WbdA mannosyltransferase. This is O-antigen chain terminator bifunctional methyltransferase/kinase WbdD from Escherichia coli.